We begin with the raw amino-acid sequence, 267 residues long: Putative phosphatase bbp_030 (267 aa).

Asp-8 serves as the catalytic Nucleophile. Asp-8 contacts Mg(2+). Leu-9 is a phosphate binding site. Asp-10 is a Mg(2+) binding site. Phosphate contacts are provided by residues 42–43 and Lys-191; that span reads TG. Asp-214 is a binding site for Mg(2+). Residue Asn-217 coordinates phosphate.

Belongs to the HAD-like hydrolase superfamily. Cof family. Mg(2+) is required as a cofactor.

This Buchnera aphidicola subsp. Baizongia pistaciae (strain Bp) protein is Putative phosphatase bbp_030.